Consider the following 448-residue polypeptide: Adenylosuccinate synthetase (448 aa).

GTP-binding positions include 22–28 (GDEGKGK) and 50–52 (GHT). The active-site Proton acceptor is Asp-23. Mg(2+) is bound by residues Asp-23 and Gly-50. IMP contacts are provided by residues 23-26 (DEGK), 48-51 (NAGH), Thr-139, Arg-153, Gln-234, Thr-249, and Arg-321. Catalysis depends on His-51, which acts as the Proton donor. 317-323 (SVTGRPR) provides a ligand contact to substrate. Residues Arg-323, 349–351 (KLD), and 431–433 (STG) contribute to the GTP site.

This sequence belongs to the adenylosuccinate synthetase family. In terms of assembly, homodimer. Requires Mg(2+) as cofactor.

The protein resides in the cytoplasm. The enzyme catalyses IMP + L-aspartate + GTP = N(6)-(1,2-dicarboxyethyl)-AMP + GDP + phosphate + 2 H(+). The protein operates within purine metabolism; AMP biosynthesis via de novo pathway; AMP from IMP: step 1/2. Functionally, plays an important role in the de novo pathway of purine nucleotide biosynthesis. Catalyzes the first committed step in the biosynthesis of AMP from IMP. This is Adenylosuccinate synthetase from Paraburkholderia phytofirmans (strain DSM 17436 / LMG 22146 / PsJN) (Burkholderia phytofirmans).